Reading from the N-terminus, the 221-residue chain is UPF0502 protein CPS_0106 (221 aa).

This sequence belongs to the UPF0502 family.

The chain is UPF0502 protein CPS_0106 from Colwellia psychrerythraea (strain 34H / ATCC BAA-681) (Vibrio psychroerythus).